A 292-amino-acid chain; its full sequence is Glutamate racemase (292 aa).

Residues 28–29 and 60–61 contribute to the substrate site; these read DS and YG. The active-site Proton donor/acceptor is Cys-91. A substrate-binding site is contributed by 92-93; the sequence is NT. The Proton donor/acceptor role is filled by Cys-200. Residue 201-202 coordinates substrate; it reads TH.

The protein belongs to the aspartate/glutamate racemases family.

It catalyses the reaction L-glutamate = D-glutamate. Its pathway is cell wall biogenesis; peptidoglycan biosynthesis. Provides the (R)-glutamate required for cell wall biosynthesis. This chain is Glutamate racemase, found in Nostoc sp. (strain PCC 7120 / SAG 25.82 / UTEX 2576).